Reading from the N-terminus, the 210-residue chain is Large ribosomal subunit protein uL3 (210 aa).

This sequence belongs to the universal ribosomal protein uL3 family. Part of the 50S ribosomal subunit. Forms a cluster with proteins L14 and L19.

Its function is as follows. One of the primary rRNA binding proteins, it binds directly near the 3'-end of the 23S rRNA, where it nucleates assembly of the 50S subunit. The chain is Large ribosomal subunit protein uL3 from Geobacter metallireducens (strain ATCC 53774 / DSM 7210 / GS-15).